The chain runs to 453 residues: tRNA-2-methylthio-N(6)-dimethylallyladenosine synthase (453 aa).

The region spanning 4 to 118 (KKFYIENYGC…IPNLINNFFK (115 aa)) is the MTTase N-terminal domain. Residues C13, C49, C83, C156, C160, and C163 each coordinate [4Fe-4S] cluster. In terms of domain architecture, Radical SAM core spans 142–388 (EEKKITAFVT…NLQKTHSYYR (247 aa)). One can recognise a TRAM domain in the interval 390–453 (RKYIGSIQDI…SATLVGDIYV (64 aa)).

It belongs to the methylthiotransferase family. MiaB subfamily. As to quaternary structure, monomer. Requires [4Fe-4S] cluster as cofactor.

It is found in the cytoplasm. The catalysed reaction is N(6)-dimethylallyladenosine(37) in tRNA + (sulfur carrier)-SH + AH2 + 2 S-adenosyl-L-methionine = 2-methylsulfanyl-N(6)-dimethylallyladenosine(37) in tRNA + (sulfur carrier)-H + 5'-deoxyadenosine + L-methionine + A + S-adenosyl-L-homocysteine + 2 H(+). Catalyzes the methylthiolation of N6-(dimethylallyl)adenosine (i(6)A), leading to the formation of 2-methylthio-N6-(dimethylallyl)adenosine (ms(2)i(6)A) at position 37 in tRNAs that read codons beginning with uridine. This chain is tRNA-2-methylthio-N(6)-dimethylallyladenosine synthase, found in Karelsulcia muelleri (strain GWSS) (Sulcia muelleri).